The sequence spans 293 residues: Ribosomal protein L11 methyltransferase (293 aa).

S-adenosyl-L-methionine is bound by residues T145, G166, D188, and N230.

It belongs to the methyltransferase superfamily. PrmA family.

The protein resides in the cytoplasm. The catalysed reaction is L-lysyl-[protein] + 3 S-adenosyl-L-methionine = N(6),N(6),N(6)-trimethyl-L-lysyl-[protein] + 3 S-adenosyl-L-homocysteine + 3 H(+). Its function is as follows. Methylates ribosomal protein L11. The protein is Ribosomal protein L11 methyltransferase of Pasteurella multocida (strain Pm70).